Consider the following 450-residue polypeptide: Phosphoglucosamine mutase (450 aa).

Catalysis depends on S102, which acts as the Phosphoserine intermediate. Mg(2+) contacts are provided by S102, D242, D244, and D246. S102 is modified (phosphoserine).

It belongs to the phosphohexose mutase family. It depends on Mg(2+) as a cofactor. Post-translationally, activated by phosphorylation.

The enzyme catalyses alpha-D-glucosamine 1-phosphate = D-glucosamine 6-phosphate. Functionally, catalyzes the conversion of glucosamine-6-phosphate to glucosamine-1-phosphate. The polypeptide is Phosphoglucosamine mutase (Staphylococcus haemolyticus (strain JCSC1435)).